Here is a 346-residue protein sequence, read N- to C-terminus: Proto-oncogene serine/threonine-protein kinase mos (346 aa).

The region spanning 60–341 (VCLLQRLGAG…RPLLVDLTSL (282 aa)) is the Protein kinase domain. Residues 66–74 (LGAGGFGSV) and Lys87 each bind ATP. Asp201 serves as the catalytic Proton acceptor.

Belongs to the protein kinase superfamily. Ser/Thr protein kinase family.

It catalyses the reaction L-seryl-[protein] + ATP = O-phospho-L-seryl-[protein] + ADP + H(+). It carries out the reaction L-threonyl-[protein] + ATP = O-phospho-L-threonyl-[protein] + ADP + H(+). In Chlorocebus aethiops (Green monkey), this protein is Proto-oncogene serine/threonine-protein kinase mos.